A 1871-amino-acid polypeptide reads, in one-letter code: Callose synthase 4 (1871 aa).

Topologically, residues 1–491 (MNQPNRGQIL…FWHLFRSFDR (491 aa)) are cytoplasmic. The helical transmembrane segment at 492–512 (MWSFYILSLQAMIIIAWNETS) threads the bilayer. At 513 to 521 (ESGGAVFHK) the chain is on the extracellular side. A helical transmembrane segment spans residues 522–542 (VLSVFITAAKLNLFQAFLDIA). The Cytoplasmic portion of the chain corresponds to 543–558 (LSWKARHSMSTHVRQR). Residues 559–579 (YIFKAVAAAVWVLLMPLTYAY) traverse the membrane as a helical segment. The Extracellular segment spans residues 580–583 (SHTS). A helical transmembrane segment spans residues 584–604 (IFIVAILIYLSPNMLPEMLLL). The Cytoplasmic segment spans residues 605-640 (IPSIRRTLEKSDFRPVKLIMWWSQPELYIGRGMHES). A helical transmembrane segment spans residues 641–661 (AWSIYKYMMFWIVLLTSKLAF). Residues 662–701 (SYYVEQIKPLMGPTKEIMSVPMPGYWLPEFFPHVKNNRGV) lie on the Extracellular side of the membrane. Residues 702–724 (VITLWSPVILVYFMDTQIWYAIV) traverse the membrane as a helical segment. Residues 725-1441 (STLVGGLYGA…FDFFRMLSCY (717 aa)) are Cytoplasmic-facing. A helical membrane pass occupies residues 1442 to 1462 (FTTVGFYFCSMLTVLTVYVFL). Topologically, residues 1463–1485 (YGRLYLVLSGVEKELGNKPMMME) are extracellular. Residues 1486–1506 (IILASQSFVQIVFLMAMPMIM) form a helical membrane-spanning segment. The Cytoplasmic portion of the chain corresponds to 1507–1516 (EIGLERGFYD). Residues 1517 to 1537 (ALFDFVLMQLQLASVFFTFQL) traverse the membrane as a helical segment. The Extracellular portion of the chain corresponds to 1538–1580 (GTKFHYYCKTLLHGGAEYRGTGRGFVVFHAKFAENYRFYSRSH). Helical transmembrane passes span 1581–1601 (FVKA…GPTY) and 1602–1622 (IGLF…APFL). Residues 1623-1675 (FNPSGFEWHEIVEDWADWKKWIEYDNGGIGVPPEKSWESWWEKDIEHLQHSGK) lie on the Extracellular side of the membrane. Residues 1676 to 1696 (WGIVVEIFFALRFFIFQYGLV) form a helical membrane-spanning segment. The Cytoplasmic portion of the chain corresponds to 1697–1708 (YQLSAFKNKYSS). Residues 1709 to 1729 (LWVFGASWLLILILLLTVTVL) traverse the membrane as a helical segment. The Extracellular segment spans residues 1730 to 1741 (DYARRRLGTEFQ). A helical membrane pass occupies residues 1742–1762 (LLFRIIKVSLFLAFMAIFITL). Over 1763–1772 (MTCRLILPQD) the chain is Cytoplasmic. Residues 1773–1793 (VFLCMLALIPTGWGLLLIAQS) form a helical membrane-spanning segment. At 1794–1815 (CKPLIQQPGIWSWVMTLAWVYD) the chain is on the extracellular side. A helical membrane pass occupies residues 1816 to 1836 (LVMGSLLFIPIAFMAWFPFIS). Topologically, residues 1837–1871 (EFQTRMLFNQAFSRGLHISRILSGQRKHRSSKNKD) are cytoplasmic.

Belongs to the glycosyltransferase 48 family.

It is found in the cell membrane. It carries out the reaction [(1-&gt;3)-beta-D-glucosyl](n) + UDP-alpha-D-glucose = [(1-&gt;3)-beta-D-glucosyl](n+1) + UDP + H(+). In terms of biological role, involved in callose synthesis at the forming cell plate during cytokinesis. During plant growth and development, callose is found as a transitory component of the cell plate in dividing cells, is a major component of pollen mother cell walls and pollen tubes, and is found as a structural component of plasmodesmatal canals. This chain is Callose synthase 4 (CALS4), found in Arabidopsis thaliana (Mouse-ear cress).